A 636-amino-acid chain; its full sequence is Multicopper oxidase CTB12 (636 aa).

A signal peptide spans 1–23; it reads MWSVRLYPLALTLLFQCVSPAAA. Residues 62 to 168 form the Plastocyanin-like 1 domain; that stretch reads AGIGFREAIF…LYGAVVIAPD (107 aa). Positions 104 and 106 each coordinate Cu cation. Asn-136 carries an N-linked (GlcNAc...) asparagine glycan. Residues His-148 and His-150 each coordinate Cu cation. An N-linked (GlcNAc...) asparagine glycan is attached at Asn-304. A Plastocyanin-like 2 domain is found at 318–381; it reads LTFVNPGGLY…QEKARHVVRV (64 aa). N-linked (GlcNAc...) asparagine glycosylation occurs at Asn-472. The Plastocyanin-like 3 domain occupies 486-613; it reads NVEDVPATEL…GGMGMVVLDG (128 aa). Cu cation contacts are provided by His-519, His-522, and His-524. Asn-576 carries an N-linked (GlcNAc...) asparagine glycan. Residues His-595, Cys-596, His-597, and His-601 each coordinate Cu cation.

Belongs to the multicopper oxidase family.

It participates in mycotoxin biosynthesis. Multicopper oxidase; part of the gene cluster that mediates the biosynthesis of cercosporin, a light-activated, non-host-selective toxin. The perylenequinone chromophore of cercosporin absorbs light energy to attain an electronically-activated triplet state and produces active oxygen species such as the hydroxyl radical, superoxide, hydrogen peroxide or singlet oxygen upon reaction with oxygen molecules. These reactive oxygen species cause damage to various cellular components including lipids, proteins and nucleic acids. The first step of cercosporin biosynthesis is performed by the polyketide synthase CTB1 which catalyzes the formation of nor-toralactone. The starter unit acyltransferase (SAT) domain of CTB1 initiates polyketide extension by the selective utilization of acetyl-CoA, which is elongated to the heptaketide in the beta-ketoacyl synthase (KS) domain by successive condensations with six malonyl units introduced by the malonyl acyltransferase (MAT) domain. The product template (PT) domain catalyzes C4-C9 and C2-C11 aldol cyclizations and dehydrations to a trihydroxynaphthalene, which is thought to be delivered to the thioesterase (TE) domain for product release. The bifunctional enzyme CTB3 then methylates nor-toralactone to toralactone before conducting an unusual oxidative aromatic ring opening. The O-methyltransferase CTB2 further methylates the nascent OH-6 of the CBT3 product, blocking further oxidation at this site before the reductase CTB6 reduces the 2-oxopropyl ketone at position C7, giving naphthalene. The FAD-dependent monooxygenase CTB5 in concert with the multicopper oxidase CTB12 are responsible for homodimerization of naphthalene with CTB7 installing the dioxepine moiety, finally producing cercosporin. The fasciclin domain-containing protein CTB11 might act with CTB5 and CTB12 whereas the roles of CTB9 and CTB10 have still to be elucidated. The protein is Multicopper oxidase CTB12 of Cercospora beticola (Sugarbeet leaf spot fungus).